The primary structure comprises 794 residues: Signal transducer and activator of transcription 5A (794 aa).

Residue Y90 is modified to Phosphotyrosine. At S128 the chain carries Phosphoserine. The SH2 domain maps to 589–686 (WNDGAILGFV…EVFSKYYTPV (98 aa)). Y682 is subject to Phosphotyrosine. Residue Y694 is modified to Phosphotyrosine; by JAK2. Positions 771 to 794 (PMDSLEPSLPPPTGLFTPGRGSLS) are disordered.

Belongs to the transcription factor STAT family. Forms a homodimer or a heterodimer with a related family member. Binds NR3C1. Interacts with NCOA1 and SOCS7. Interacts with ERBB4. Interacts with EBF4. Interacts with CD69. ISGylated. In terms of processing, tyrosine phosphorylated in response to KITLG/SCF, IL2, IL3, IL7, IL15, CSF2/GMCSF, GH1, PRL, EPO and THPO. Activated KIT promotes phosphorylation on tyrosine residues and subsequent translocation to the nucleus. Tyrosine phosphorylated in response to constitutively activated FGFR1, FGFR2, FGFR3 and FGFR4. Tyrosine phosphorylation is required for DNA-binding activity and dimerization. Serine phosphorylation is also required for maximal transcriptional activity. Tyrosine phosphorylated in response to signaling via activated FLT3; wild-type FLT3 results in much weaker phosphorylation than constitutively activated mutant FLT3. Alternatively, can be phosphorylated by JAK2 at Tyr-694.

It localises to the cytoplasm. The protein localises to the nucleus. Carries out a dual function: signal transduction and activation of transcription. Mediates cellular responses to the cytokine KITLG/SCF and other growth factors. May mediate cellular responses to activated FGFR1, FGFR2, FGFR3 and FGFR4. Binds to the GAS element and activates PRL-induced transcription. Regulates the expression of milk proteins during lactation. The protein is Signal transducer and activator of transcription 5A (STAT5A) of Bos taurus (Bovine).